Reading from the N-terminus, the 230-residue chain is Ribosome maturation factor RimM (230 aa).

One can recognise a PRC barrel domain in the interval 149 to 230; the sequence is ADEFYWVDLI…RVVVDWEADY (82 aa).

It belongs to the RimM family. As to quaternary structure, binds ribosomal protein uS19.

The protein resides in the cytoplasm. In terms of biological role, an accessory protein needed during the final step in the assembly of 30S ribosomal subunit, possibly for assembly of the head region. Essential for efficient processing of 16S rRNA. May be needed both before and after RbfA during the maturation of 16S rRNA. It has affinity for free ribosomal 30S subunits but not for 70S ribosomes. This Burkholderia mallei (strain NCTC 10229) protein is Ribosome maturation factor RimM.